A 508-amino-acid chain; its full sequence is Probable cytosol aminopeptidase (508 aa).

K274 and D279 together coordinate Mn(2+). K286 is an active-site residue. Mn(2+) is bound by residues D297, D356, and E358. R360 is an active-site residue.

This sequence belongs to the peptidase M17 family. The cofactor is Mn(2+).

It localises to the cytoplasm. The enzyme catalyses Release of an N-terminal amino acid, Xaa-|-Yaa-, in which Xaa is preferably Leu, but may be other amino acids including Pro although not Arg or Lys, and Yaa may be Pro. Amino acid amides and methyl esters are also readily hydrolyzed, but rates on arylamides are exceedingly low.. It carries out the reaction Release of an N-terminal amino acid, preferentially leucine, but not glutamic or aspartic acids.. Functionally, presumably involved in the processing and regular turnover of intracellular proteins. Catalyzes the removal of unsubstituted N-terminal amino acids from various peptides. This is Probable cytosol aminopeptidase from Paraburkholderia phytofirmans (strain DSM 17436 / LMG 22146 / PsJN) (Burkholderia phytofirmans).